Reading from the N-terminus, the 286-residue chain is L-ribulose 3-epimerase (286 aa).

Residues His12, Ser69, Glu152, and Glu158 each contribute to the D-allulose site. Positions 12, 69, 152, and 158 each coordinate D-fructose. The active-site Proton donor/acceptor is the Glu152. Glu152 contacts Mn(2+). Asp185 is a Mn(2+) binding site. 4 residues coordinate D-allulose: His188, His211, Arg217, and Glu246. Positions 188, 211, 217, and 246 each coordinate D-fructose. His211 provides a ligand contact to Mn(2+). Glu246 serves as the catalytic Proton donor/acceptor. Residue Glu246 coordinates Mn(2+).

It belongs to the hyi family. As to quaternary structure, homodimer. It depends on Mn(2+) as a cofactor.

It catalyses the reaction L-ribulose = L-xylulose. The catalysed reaction is D-ribulose = D-xylulose. It carries out the reaction D-allulose = keto-D-fructose. The enzyme catalyses keto-L-tagatose = keto-L-sorbose. It catalyses the reaction keto-D-tagatose = keto-D-sorbose. In terms of biological role, catalyzes the epimerization of various ketoses at the C(3) position. Exhibits the highest enzymatic activity toward L-ribulose, followed by D-ribulose, D-allulose and D-fructose. Shows lower activity with L-xylulose, L-tagatose, D-xylulose, D-tagatose, L-sorbose, D-sorbose, and weak activity with L-allulose and L-fructose. The chain is L-ribulose 3-epimerase from Methylomonas sp. (strain DH-1).